Here is a 125-residue protein sequence, read N- to C-terminus: Ribonuclease P protein component (125 aa).

The protein belongs to the RnpA family. As to quaternary structure, consists of a catalytic RNA component (M1 or rnpB) and a protein subunit.

It catalyses the reaction Endonucleolytic cleavage of RNA, removing 5'-extranucleotides from tRNA precursor.. Its function is as follows. RNaseP catalyzes the removal of the 5'-leader sequence from pre-tRNA to produce the mature 5'-terminus. It can also cleave other RNA substrates such as 4.5S RNA. The protein component plays an auxiliary but essential role in vivo by binding to the 5'-leader sequence and broadening the substrate specificity of the ribozyme. The protein is Ribonuclease P protein component of Clostridium botulinum (strain Eklund 17B / Type B).